A 235-amino-acid chain; its full sequence is Putative cobalt transport protein CbiM 2 (235 aa).

Helical transmembrane passes span 9 to 29, 41 to 61, 80 to 100, 107 to 127, 135 to 155, 160 to 180, and 181 to 201; these read PAGW…MGII, YLPL…LKLP, FGYC…ALLL, TMGA…YAVY, INIY…TYII, LALA…AFFS, and IFAI…ALVF.

It belongs to the CbiM family. As to quaternary structure, forms an energy-coupling factor (ECF) transporter complex composed of an ATP-binding protein (A component, CbiO), a transmembrane protein (T component, CbiQ) and 2 possible substrate-capture proteins (S components, CbiM and CbiN) of unknown stoichimetry.

It localises to the cell membrane. It participates in cofactor biosynthesis; adenosylcobalamin biosynthesis. Part of the energy-coupling factor (ECF) transporter complex CbiMNOQ involved in cobalt import. The polypeptide is Putative cobalt transport protein CbiM 2 (Methanosphaerula palustris (strain ATCC BAA-1556 / DSM 19958 / E1-9c)).